Consider the following 129-residue polypeptide: NADPH-dependent 7-cyano-7-deazaguanine reductase (129 aa).

Cys-34 functions as the Thioimide intermediate in the catalytic mechanism. The active-site Proton donor is Asp-41. Residues Val-56–Leu-58 and His-75–Glu-76 each bind substrate.

It belongs to the GTP cyclohydrolase I family. QueF type 1 subfamily.

It localises to the cytoplasm. It catalyses the reaction 7-aminomethyl-7-carbaguanine + 2 NADP(+) = 7-cyano-7-deazaguanine + 2 NADPH + 3 H(+). Its pathway is tRNA modification; tRNA-queuosine biosynthesis. Catalyzes the NADPH-dependent reduction of 7-cyano-7-deazaguanine (preQ0) to 7-aminomethyl-7-deazaguanine (preQ1). This Thioalkalivibrio sulfidiphilus (strain HL-EbGR7) protein is NADPH-dependent 7-cyano-7-deazaguanine reductase.